The chain runs to 163 residues: Glycine cleavage system H-like protein gcvH5, mitochondrial (163 aa).

The transit peptide at 1 to 23 (MFLFKTTNNLRKSLSNKFFCTRY) directs the protein to the mitochondrion. Residues 50–136 (IGTLGLTENG…MSKGWLCKIK (87 aa)) form the Lipoyl-binding domain.

The protein belongs to the GcvH family.

Its subcellular location is the mitochondrion. This chain is Glycine cleavage system H-like protein gcvH5, mitochondrial (gcvH5), found in Dictyostelium discoideum (Social amoeba).